The primary structure comprises 125 residues: Somatostatin-2 (125 aa).

A signal peptide spans 1 to 24 (MQCIRCPAILALLALVLCGPSVSS). At Gln-25 the chain carries Pyrrolidone carboxylic acid. Positions 25–97 (QLDREQSDNQ…ATGGRMNLER (73 aa)) are excised as a propeptide. The segment at 82 to 107 (AEDASMATGGRMNLERSVDSTNNLPP) is disordered. Cysteines 114 and 125 form a disulfide. Lys-120 bears the 5-hydroxylysine mark.

Belongs to the somatostatin family.

Its subcellular location is the secreted. Somatostatin inhibits the release of somatotropin. The chain is Somatostatin-2 (sst2) from Lophius americanus (American angler).